A 292-amino-acid chain; its full sequence is Hypersensitive-induced response protein 4 (292 aa).

Gly-2 is lipidated: N-myristoyl glycine.

As to quaternary structure, self-interacts and forms heteromers. Interacts with NB-LRR class of R proteins before R proteins (e.g. RPS2 or RPM1) are activated by the effectors.

Its subcellular location is the cell membrane. The sequence is that of Hypersensitive-induced response protein 4 (HIR4) from Arabidopsis thaliana (Mouse-ear cress).